A 680-amino-acid chain; its full sequence is Putative E3 ubiquitin-protein ligase UNKL (680 aa).

Residues 1 to 22 (MPSVSKAAAAALSGSPPQTEKP) form a disordered region. 4 consecutive C3H1-type zinc fingers follow at residues 75–104 (YSPD…HRTT), 115–145 (YYKT…HGPL), 243–277 (QYRS…HSRT), and 283–310 (PEST…HVEK). Composition is skewed to low complexity over residues 326–337 (TSPSSTGSGQPG), 375–396 (VSSS…SPTA), 465–497 (SLPR…VGSS), and 545–562 (SPSP…SASP). Disordered regions lie at residues 326–358 (TSPS…QDSK), 375–400 (VSSS…LPAP), 442–520 (DGHD…SAAS), and 545–566 (SPSP…NGAE). Positions 563–619 (NGAELARVRRQLDEAKRKIRQWEESWQQVKQVCDAWQREAQEAKERARVADSDRQLA) form a coiled coil. The RING-type zinc finger occupies 639 to 674 (CVACRERAHGAVLRPCQHHILCEPCAATAPECPYCK).

This sequence belongs to the unkempt family. In terms of assembly, isoform 4 (C-terminal) interacts with the GTP-bound form of RAC1. Isoform 4 (C-terminal) interacts with SMARCD2/BAF60b. Post-translationally, isoform 4 is ubiquitinated in the C-terminal. Ubiquitination is enhanced by activated RAC1. The presence of the RING finger domain is not essential for ubiquitination to occur.

The protein localises to the cytoplasm. Its subcellular location is the nucleus. It participates in protein modification; protein ubiquitination. May participate in a protein complex showing an E3 ligase activity regulated by RAC1. Ubiquitination is directed towards itself and possibly other substrates, such as SMARCD2/BAF60b. Intrinsic E3 ligase activity has not been proven. The sequence is that of Putative E3 ubiquitin-protein ligase UNKL (UNKL) from Homo sapiens (Human).